We begin with the raw amino-acid sequence, 178 residues long: ATP synthase subunit delta (178 aa).

Belongs to the ATPase delta chain family. F-type ATPases have 2 components, F(1) - the catalytic core - and F(0) - the membrane proton channel. F(1) has five subunits: alpha(3), beta(3), gamma(1), delta(1), epsilon(1). F(0) has three main subunits: a(1), b(2) and c(10-14). The alpha and beta chains form an alternating ring which encloses part of the gamma chain. F(1) is attached to F(0) by a central stalk formed by the gamma and epsilon chains, while a peripheral stalk is formed by the delta and b chains.

It localises to the cell membrane. F(1)F(0) ATP synthase produces ATP from ADP in the presence of a proton or sodium gradient. F-type ATPases consist of two structural domains, F(1) containing the extramembraneous catalytic core and F(0) containing the membrane proton channel, linked together by a central stalk and a peripheral stalk. During catalysis, ATP synthesis in the catalytic domain of F(1) is coupled via a rotary mechanism of the central stalk subunits to proton translocation. Its function is as follows. This protein is part of the stalk that links CF(0) to CF(1). It either transmits conformational changes from CF(0) to CF(1) or is implicated in proton conduction. The chain is ATP synthase subunit delta from Acetivibrio thermocellus (strain ATCC 27405 / DSM 1237 / JCM 9322 / NBRC 103400 / NCIMB 10682 / NRRL B-4536 / VPI 7372) (Clostridium thermocellum).